Here is a 311-residue protein sequence, read N- to C-terminus: Glycosyltransferase 6 domain-containing protein 1 (311 aa).

Residues 1-5 (MKAKG) are Cytoplasmic-facing. The chain crosses the membrane as a helical; Signal-anchor for type II membrane protein span at residues 6–26 (RILLLTSCLFLLLLLLAKIHL). Residues 27-311 (RNHQEEELPL…KVAHYPTDDL (285 aa)) lie on the Lumenal side of the membrane. A glycan (N-linked (GlcNAc...) asparagine) is linked at Asn77. Residues 85–90 (FAVSSF), 176–178 (SVN), and 198–201 (HAWW) each bind substrate. Glu266 serves as the catalytic Nucleophile.

This sequence belongs to the glycosyltransferase 6 family. Mn(2+) is required as a cofactor.

It localises to the membrane. This is Glycosyltransferase 6 domain-containing protein 1 (Glt6d1) from Rattus norvegicus (Rat).